The primary structure comprises 267 residues: 4-hydroxy-tetrahydrodipicolinate reductase (267 aa).

NAD(+) is bound at residue 10–15 (GAGGKM). NADP(+) is bound at residue R38. Residues 100-102 (GTT) and 126-129 (APNF) each bind NAD(+). Catalysis depends on H156, which acts as the Proton donor/acceptor. H157 contacts (S)-2,3,4,5-tetrahydrodipicolinate. K160 (proton donor) is an active-site residue. 166 to 167 (GT) contacts (S)-2,3,4,5-tetrahydrodipicolinate.

It belongs to the DapB family.

It localises to the cytoplasm. It catalyses the reaction (S)-2,3,4,5-tetrahydrodipicolinate + NAD(+) + H2O = (2S,4S)-4-hydroxy-2,3,4,5-tetrahydrodipicolinate + NADH + H(+). It carries out the reaction (S)-2,3,4,5-tetrahydrodipicolinate + NADP(+) + H2O = (2S,4S)-4-hydroxy-2,3,4,5-tetrahydrodipicolinate + NADPH + H(+). It functions in the pathway amino-acid biosynthesis; L-lysine biosynthesis via DAP pathway; (S)-tetrahydrodipicolinate from L-aspartate: step 4/4. In terms of biological role, catalyzes the conversion of 4-hydroxy-tetrahydrodipicolinate (HTPA) to tetrahydrodipicolinate. The sequence is that of 4-hydroxy-tetrahydrodipicolinate reductase from Desulfitobacterium hafniense (strain DSM 10664 / DCB-2).